We begin with the raw amino-acid sequence, 189 residues long: Casparian strip membrane protein 1 (189 aa).

Residues 1 to 42 (MEKNESSAIEIAESSKERKGKAPLLAAAVGHDRAAGYKRGVS) lie on the Cytoplasmic side of the membrane. The helical transmembrane segment at 43 to 63 (IFDLILRISAATAALAATIVM) threads the bilayer. At 64 to 90 (GTTEQTLPFFTQFFQFRAQYDDLPTFT) the chain is on the extracellular side. A helical membrane pass occupies residues 91 to 111 (FFVVGMAIVTGYLILSVPLSI). Over 112–130 (VCIARPVAIGPRFLLIVCD) the chain is Cytoplasmic. Residues 131–151 (TVTAVLATSAAGSSAAIVYLA) traverse the membrane as a helical segment. At 152-189 (HNGNSDANWLAICQQFNDFCQRVSGAVVAAFVAVVCSS) the chain is on the extracellular side.

This sequence belongs to the Casparian strip membrane proteins (CASP) family. As to quaternary structure, homodimer and heterodimers.

The protein resides in the cell membrane. Regulates membrane-cell wall junctions and localized cell wall deposition. Required for establishment of the Casparian strip membrane domain (CSD) and the subsequent formation of Casparian strips, a cell wall modification of the root endodermis that determines an apoplastic barrier between the intraorganismal apoplasm and the extraorganismal apoplasm and prevents lateral diffusion. The polypeptide is Casparian strip membrane protein 1 (Striga asiatica (Asiatic witchweed)).